Consider the following 284-residue polypeptide: L-ribulose-5-phosphate 3-epimerase UlaE (284 aa).

The protein belongs to the L-ribulose-5-phosphate 3-epimerase family.

It carries out the reaction L-ribulose 5-phosphate = L-xylulose 5-phosphate. It functions in the pathway cofactor degradation; L-ascorbate degradation; D-xylulose 5-phosphate from L-ascorbate: step 3/4. Functionally, catalyzes the isomerization of L-xylulose-5-phosphate to L-ribulose-5-phosphate. Is involved in the anaerobic L-ascorbate utilization. The polypeptide is L-ribulose-5-phosphate 3-epimerase UlaE (Escherichia coli (strain SMS-3-5 / SECEC)).